Here is a 113-residue protein sequence, read N- to C-terminus: DNA-binding protein Mevan_1162 (113 aa).

A compositionally biased stretch (basic and acidic residues) spans 1–12; that stretch reads MDPEEIKQKKLQ. The interval 1–22 is disordered; it reads MDPEEIKQKKLQEMQAKAQDPE.

It belongs to the PDCD5 family.

This chain is DNA-binding protein Mevan_1162, found in Methanococcus vannielii (strain ATCC 35089 / DSM 1224 / JCM 13029 / OCM 148 / SB).